The sequence spans 86 residues: Kappa-theraphotoxin-Cg1a 6 (86 aa).

An N-terminal signal peptide occupies residues 1–21 (MKVSVLITLAVLGVMFVWASA). Residues 22–50 (AELEERGSDQRDSPAWLKSMERIFQSEER) constitute a propeptide that is removed on maturation. Disulfide bonds link C52–C66, C59–C71, and C65–C78. The residue at position 84 (F84) is a Phenylalanine amide.

It belongs to the neurotoxin 10 (Hwtx-1) family. 28 (Jztx-11) subfamily. In terms of tissue distribution, expressed by the venom gland.

It is found in the secreted. Functionally, this toxin acts as a voltage-dependent gating-modifier. It inhibits the sodium conductance (IC(50)=124 nM) and slows the fast inactivation (EC(50)=1180 nM) of Nav1.5/SCN5A. It significantly shifts the activation to more depolarized voltages and decreases the deactivation of Nav1.5 currents upon extreme depolarization, but only slightly affects voltage-dependence of steady-state inactivation. In addition, this toxin causes an approximately five-fold decrease in the rate of recovery from inactivation and an approximately 1.9-fold reduction in the closed-state inactivation rate. This toxin integrates the functions of site 3 toxins (alpha-scorpion toxins) with site 4 toxins (beta-scorpion and spider toxins) by targeting multiple sites on Nav1.5. Also shows inhibition of voltage-gated potassium channels (5 uM completely inhibits Kv2.1/KCNB1, whereas 5 uM moderately inhibits Kv4.2/KCND2 Kv4.1/KCND1 channels). This chain is Kappa-theraphotoxin-Cg1a 6, found in Chilobrachys guangxiensis (Chinese earth tiger tarantula).